Consider the following 375-residue polypeptide: Histidine biosynthesis bifunctional protein HisB (375 aa).

Positions 1–168 (MTPILFVDRD…GIAHELADAP (168 aa)) are histidinol-phosphatase. Catalysis depends on aspartate 8, which acts as the Nucleophile. Mg(2+)-binding residues include aspartate 8, aspartate 10, and aspartate 128. The active-site Proton donor is the aspartate 10. An imidazoleglycerol-phosphate dehydratase region spans residues 169 to 375 (RRAVVQRNTK…SALPTTKGAL (207 aa)).

This sequence in the N-terminal section; belongs to the histidinol-phosphatase family. It in the C-terminal section; belongs to the imidazoleglycerol-phosphate dehydratase family. Requires Mg(2+) as cofactor.

Its subcellular location is the cytoplasm. It catalyses the reaction D-erythro-1-(imidazol-4-yl)glycerol 3-phosphate = 3-(imidazol-4-yl)-2-oxopropyl phosphate + H2O. The enzyme catalyses L-histidinol phosphate + H2O = L-histidinol + phosphate. It functions in the pathway amino-acid biosynthesis; L-histidine biosynthesis; L-histidine from 5-phospho-alpha-D-ribose 1-diphosphate: step 6/9. Its pathway is amino-acid biosynthesis; L-histidine biosynthesis; L-histidine from 5-phospho-alpha-D-ribose 1-diphosphate: step 8/9. This is Histidine biosynthesis bifunctional protein HisB from Xanthomonas oryzae pv. oryzae (strain MAFF 311018).